The primary structure comprises 296 residues: Protoheme IX farnesyltransferase (296 aa).

Helical transmembrane passes span 13 to 33 (IIFG…KGII), 35 to 55 (YPLF…GCVF), 84 to 104 (VTLI…YIAA), 107 to 127 (LAMW…SLYM), 132 to 152 (VYGT…GYCA), 162 to 182 (LILL…IAIF), 208 to 228 (ITLY…VGYA), 229 to 249 (GYKY…MALR), and 264 to 284 (FVFS…DFSV).

This sequence belongs to the UbiA prenyltransferase family. Protoheme IX farnesyltransferase subfamily.

The protein localises to the cell inner membrane. The enzyme catalyses heme b + (2E,6E)-farnesyl diphosphate + H2O = Fe(II)-heme o + diphosphate. The protein operates within porphyrin-containing compound metabolism; heme O biosynthesis; heme O from protoheme: step 1/1. Its function is as follows. Converts heme B (protoheme IX) to heme O by substitution of the vinyl group on carbon 2 of heme B porphyrin ring with a hydroxyethyl farnesyl side group. In Edwardsiella ictaluri (strain 93-146), this protein is Protoheme IX farnesyltransferase.